Here is a 445-residue protein sequence, read N- to C-terminus: Phosphoglucosamine mutase (445 aa).

The Phosphoserine intermediate role is filled by Ser-101. Ser-101, Asp-240, Asp-242, and Asp-244 together coordinate Mg(2+). Phosphoserine is present on Ser-101.

The protein belongs to the phosphohexose mutase family. Mg(2+) serves as cofactor. In terms of processing, activated by phosphorylation.

It carries out the reaction alpha-D-glucosamine 1-phosphate = D-glucosamine 6-phosphate. Functionally, catalyzes the conversion of glucosamine-6-phosphate to glucosamine-1-phosphate. In Pseudomonas aeruginosa (strain LESB58), this protein is Phosphoglucosamine mutase.